The chain runs to 329 residues: GTPase Obg (329 aa).

The region spanning 1 to 159 is the Obg domain; sequence MQFIDQARIT…WPLQLELKLL (159 aa). Residues 160 to 328 enclose the OBG-type G domain; that stretch reads AEVGIIGLPN…LLDQVWQLLG (169 aa). Residues 166-173, 191-195, 213-216, 280-283, and 309-311 contribute to the ATP site; these read GLPNAGKS, FTTLV, DIPG, NKLE, and SAV. Mg(2+) is bound by residues Ser-173 and Thr-193.

This sequence belongs to the TRAFAC class OBG-HflX-like GTPase superfamily. OBG GTPase family. Monomer. Mg(2+) serves as cofactor.

The protein resides in the cytoplasm. In terms of biological role, an essential GTPase which binds GTP, GDP and possibly (p)ppGpp with moderate affinity, with high nucleotide exchange rates and a fairly low GTP hydrolysis rate. Plays a role in control of the cell cycle, stress response, ribosome biogenesis and in those bacteria that undergo differentiation, in morphogenesis control. The polypeptide is GTPase Obg (Synechococcus sp. (strain WH7803)).